Here is a 480-residue protein sequence, read N- to C-terminus: Proline--tRNA ligase (480 aa).

It belongs to the class-II aminoacyl-tRNA synthetase family. ProS type 3 subfamily. In terms of assembly, homodimer.

The protein localises to the cytoplasm. The enzyme catalyses tRNA(Pro) + L-proline + ATP = L-prolyl-tRNA(Pro) + AMP + diphosphate. Functionally, catalyzes the attachment of proline to tRNA(Pro) in a two-step reaction: proline is first activated by ATP to form Pro-AMP and then transferred to the acceptor end of tRNA(Pro). The sequence is that of Proline--tRNA ligase from Alkaliphilus oremlandii (strain OhILAs) (Clostridium oremlandii (strain OhILAs)).